The primary structure comprises 328 residues: Carbonic anhydrase-related protein 10 (328 aa).

One can recognise an Alpha-carbonic anhydrase domain in the interval 31–301 (GWWAYKEVVQ…LNNRCIRTNI (271 aa)).

The protein belongs to the alpha-carbonic anhydrase family.

Does not have a catalytic activity. The sequence is that of Carbonic anhydrase-related protein 10 (CA10) from Bos taurus (Bovine).